We begin with the raw amino-acid sequence, 349 residues long: Fructose-1,6-bisphosphatase class 1 (349 aa).

Mg(2+)-binding residues include Glu91, Asp110, Leu112, and Asp113. Residues 113 to 116 and Asn205 contribute to the substrate site; that span reads DGSS. Glu277 is a Mg(2+) binding site.

Belongs to the FBPase class 1 family. In terms of assembly, homotetramer. The cofactor is Mg(2+).

The protein localises to the cytoplasm. The catalysed reaction is beta-D-fructose 1,6-bisphosphate + H2O = beta-D-fructose 6-phosphate + phosphate. Its pathway is carbohydrate biosynthesis; gluconeogenesis. This chain is Fructose-1,6-bisphosphatase class 1, found in Rhizobium meliloti (strain 1021) (Ensifer meliloti).